The chain runs to 1131 residues: Filamin A-interacting protein 1-like (1131 aa).

A disordered region spans residues 1-62; sequence MRSRSSNAEG…KSHTGKGHHT (62 aa). The segment covering 50–62 has biased composition (basic and acidic residues); the sequence is VSEKSHTGKGHHT. 2 coiled-coil regions span residues 139–583 and 610–780; these read NELD…LSKV and SKST…KSLR. The residue at position 789 (Ser-789) is a Phosphoserine. Phosphothreonine is present on residues Thr-984 and Thr-992. At Ser-1050 the chain carries Phosphoserine.

The protein belongs to the FILIP1 family.

The protein localises to the cytoplasm. The protein resides in the membrane. It localises to the nucleus. Its function is as follows. Acts as a regulator of the antiangiogenic activity on endothelial cells. When overexpressed in endothelial cells, leads to inhibition of cell proliferation and migration and an increase in apoptosis. Inhibits melanoma growth When expressed in tumor-associated vasculature. The protein is Filamin A-interacting protein 1-like (Filip1l) of Mus musculus (Mouse).